Reading from the N-terminus, the 268-residue chain is Undecaprenyl-diphosphatase (268 aa).

The next 7 helical transmembrane spans lie at 47-67, 83-103, 109-129, 144-164, 184-204, 218-238, and 246-266; these read FAVL…FAKL, FVIG…VAGS, LFNP…LLWV, FPLP…IPGV, AAEF…VYDF, IVAI…KTFL, and FELF…ALAM.

Belongs to the UppP family.

Its subcellular location is the cell inner membrane. It catalyses the reaction di-trans,octa-cis-undecaprenyl diphosphate + H2O = di-trans,octa-cis-undecaprenyl phosphate + phosphate + H(+). Its function is as follows. Catalyzes the dephosphorylation of undecaprenyl diphosphate (UPP). Confers resistance to bacitracin. The polypeptide is Undecaprenyl-diphosphatase (Rhodopseudomonas palustris (strain BisB5)).